The chain runs to 369 residues: Ribosomal RNA large subunit methyltransferase G (369 aa).

It belongs to the methyltransferase superfamily. RlmG family.

The protein resides in the cytoplasm. The enzyme catalyses guanosine(1835) in 23S rRNA + S-adenosyl-L-methionine = N(2)-methylguanosine(1835) in 23S rRNA + S-adenosyl-L-homocysteine + H(+). Specifically methylates the guanine in position 1835 (m2G1835) of 23S rRNA. The polypeptide is Ribosomal RNA large subunit methyltransferase G (Magnetococcus marinus (strain ATCC BAA-1437 / JCM 17883 / MC-1)).